The chain runs to 128 residues: Large ribosomal subunit protein bL17 (128 aa).

The protein belongs to the bacterial ribosomal protein bL17 family. As to quaternary structure, part of the 50S ribosomal subunit. Contacts protein L32.

The polypeptide is Large ribosomal subunit protein bL17 (Glaesserella parasuis serovar 5 (strain SH0165) (Haemophilus parasuis)).